A 273-amino-acid polypeptide reads, in one-letter code: 4-hydroxy-tetrahydrodipicolinate reductase (273 aa).

NAD(+)-binding positions include 12 to 17 (GAGGRM) and glutamate 38. An NADP(+)-binding site is contributed by arginine 39. Residues 102–104 (GTT) and 126–129 (AANF) each bind NAD(+). The active-site Proton donor/acceptor is histidine 159. Histidine 160 contributes to the (S)-2,3,4,5-tetrahydrodipicolinate binding site. The Proton donor role is filled by lysine 163. (S)-2,3,4,5-tetrahydrodipicolinate is bound at residue 169-170 (GT).

The protein belongs to the DapB family. As to quaternary structure, homotetramer.

The protein localises to the cytoplasm. The enzyme catalyses (S)-2,3,4,5-tetrahydrodipicolinate + NAD(+) + H2O = (2S,4S)-4-hydroxy-2,3,4,5-tetrahydrodipicolinate + NADH + H(+). It carries out the reaction (S)-2,3,4,5-tetrahydrodipicolinate + NADP(+) + H2O = (2S,4S)-4-hydroxy-2,3,4,5-tetrahydrodipicolinate + NADPH + H(+). It functions in the pathway amino-acid biosynthesis; L-lysine biosynthesis via DAP pathway; (S)-tetrahydrodipicolinate from L-aspartate: step 4/4. Catalyzes the conversion of 4-hydroxy-tetrahydrodipicolinate (HTPA) to tetrahydrodipicolinate. In Salmonella paratyphi A (strain ATCC 9150 / SARB42), this protein is 4-hydroxy-tetrahydrodipicolinate reductase.